The following is a 727-amino-acid chain: Telomere repeats-binding bouquet formation protein 1 (727 aa).

2 ARM repeats span residues Glu-101–Gly-144 and Asn-339–Pro-382. The stretch at Glu-398–Thr-446 forms a coiled coil. Residues Arg-457–His-468 show a composition bias toward basic and acidic residues. Residues Arg-457–Thr-493 form a disordered region. The interval Gln-523–Pro-662 is interaction with TERF1. Thr-648 carries the phosphothreonine modification. Positions Lys-666–Thr-719 constitute a Myb-like domain.

Belongs to the TERB1 family. Component of the MAJIN-TERB1-TERB2 complex, composed of MAJIN, TERB1 and TERB2. Interacts with TERF1, STAG3 and SUN1. Interacts (via Myb-like domain) with the cohesin complex; probably mediated via interaction with STAG3. Phosphorylated by CDK. Phosphorylation by CDK takes place in late prophase when the cap exchange is prominent. is important for the stabilization of telomere attachment but dispenable for the cap exchange.

The protein resides in the chromosome. Its subcellular location is the telomere. It is found in the nucleus inner membrane. Meiosis-specific telomere-associated protein involved in meiotic telomere attachment to the nucleus inner membrane, a crucial step for homologous pairing and synapsis. Component of the MAJIN-TERB1-TERB2 complex, which promotes telomere cap exchange by mediating attachment of telomeric DNA to the inner nuclear membrane and replacement of the protective cap of telomeric chromosomes: in early meiosis, the MAJIN-TERB1-TERB2 complex associates with telomeric DNA and the shelterin/telosome complex. During prophase, the complex matures and promotes release of the shelterin/telosome complex from telomeric DNA. In the MAJIN-TERB1-TERB2 complex, TERB1 probably mediates association with the shelterin/telosome complex via interaction with TERF1, promoting priming telomeric DNA attachment'. Promotes telomere association with the nuclear envelope and deposition of the SUN-KASH/LINC complex. Also recruits cohesin to telomeres to develop structural rigidity. This is Telomere repeats-binding bouquet formation protein 1 from Homo sapiens (Human).